The chain runs to 339 residues: DNA repair protein RAD51 homolog 1 (339 aa).

Residues 1–23 are disordered; it reads MAMQVQFEASTDTSAEEESFGPE. Residues 48–77 enclose the HhH domain; the sequence is TVESVAHAPKKELLNIKGISEAKADKILAE. 127 to 134 contacts ATP; the sequence is GEFRTGKT.

Belongs to the RecA family. RAD51 subfamily. Forms linear homooligomers, giving rise to a RAD51 nucleoprotein filament, which is essential for strand-pairing reactions during DNA recombination. Expressed at high levels in lymphoid and reproductive organs.

It localises to the nucleus. Its subcellular location is the cytoplasm. It is found in the chromosome. In terms of biological role, plays an important role in homologous strand exchange, a key step in DNA repair through homologous recombination (HR). Binds to single-stranded DNA in an ATP-dependent manner to form nucleoprotein filaments which are essential for the homology search and strand exchange. Catalyzes the recognition of homology and strand exchange between homologous DNA partners to form a joint molecule between a processed DNA break and the repair template. Recruited to resolve stalled replication forks during replication stress. Also involved in interstrand cross-link repair. The protein is DNA repair protein RAD51 homolog 1 (RAD51A) of Gallus gallus (Chicken).